Consider the following 269-residue polypeptide: Chromophore lyase CRL, chloroplastic (269 aa).

Residues 19–36 traverse the membrane as a helical segment; that stretch reads ARGLVVKTLVLIGGALLI.

Belongs to the CpcT/CpeT biliprotein lyase family. In terms of tissue distribution, mostly expressed in shoot apices, to a lower extent, in leaves, inflorescence stems, buds and cotyledons, and, at low levels, in roots and siliques.

The protein localises to the plastid. Its subcellular location is the chloroplast outer membrane. Covalently attaches a chromophore to Cys residue(s) of phycobiliproteins. Required for plastid division, and involved in cell differentiation and regulation of the cell division plane. Maintenance of plastid homeostasis controls plant preconditioning to stress and stress acclimation. In terms of biological role, confers sensitivity to cabbage leaf curl virus (CaLCuV), probably by supporting viral movement. The protein is Chromophore lyase CRL, chloroplastic (CRL) of Arabidopsis thaliana (Mouse-ear cress).